A 465-amino-acid chain; its full sequence is Phenylalanine--tRNA ligase alpha subunit (465 aa).

Residues T311 and F389 each contribute to the L-phenylalanine site. E391 contacts Mg(2+).

Belongs to the class-II aminoacyl-tRNA synthetase family. Phe-tRNA synthetase alpha subunit type 2 subfamily. Tetramer of two alpha and two beta subunits. It depends on Mg(2+) as a cofactor.

Its subcellular location is the cytoplasm. It carries out the reaction tRNA(Phe) + L-phenylalanine + ATP = L-phenylalanyl-tRNA(Phe) + AMP + diphosphate + H(+). This is Phenylalanine--tRNA ligase alpha subunit from Metallosphaera sedula (strain ATCC 51363 / DSM 5348 / JCM 9185 / NBRC 15509 / TH2).